Reading from the N-terminus, the 78-residue chain is Large ribosomal subunit protein bL28 (78 aa).

The disordered stretch occupies residues 1–21 (MSRVCQLSGKRANNGMAVSHS).

The protein belongs to the bacterial ribosomal protein bL28 family.

The chain is Large ribosomal subunit protein bL28 from Synechococcus sp. (strain RCC307).